We begin with the raw amino-acid sequence, 261 residues long: Cytochrome c oxidase subunit 3 (261 aa).

Residues 1 to 15 lie on the Mitochondrial matrix side of the membrane; the sequence is MTHQTHAYHMVNPSP. Residues 16 to 34 form a helical membrane-spanning segment; that stretch reads WPLTGALSALLMTFGLIMW. The Mitochondrial intermembrane segment spans residues 35-40; the sequence is FHFNST. The chain crosses the membrane as a helical span at residues 41–66; that stretch reads ALLMLGLTTNMLTMYQWWRDIIREST. Over 67–72 the chain is Mitochondrial matrix; sequence FQGHHT. A helical transmembrane segment spans residues 73 to 105; that stretch reads PVVQKGLRYGMILFIISEVLFFTGFFWAFYHSS. Residues 106 to 128 lie on the Mitochondrial intermembrane side of the membrane; the sequence is LAPTPELGGCWPPTGIHPLNPLE. The helical transmembrane segment at 129–152 threads the bilayer; the sequence is VPLLNTSVLLASGVSITWAHHSLM. The Mitochondrial matrix segment spans residues 153–155; the sequence is EGH. Residues 156–183 traverse the membrane as a helical segment; it reads RNHMLQALFITIALGVYFTLLQASEYYE. Residues 184–190 are Mitochondrial intermembrane-facing; it reads APFTISD. The chain crosses the membrane as a helical span at residues 191–223; that stretch reads GVYGSTFFVATGFHGLHVIIGSTFLIVCFFRQL. Residues 224 to 232 lie on the Mitochondrial matrix side of the membrane; it reads KFHFTSSHH. Residues 233–256 traverse the membrane as a helical segment; sequence FGFEAAAWYWHFVDVVWLFLYVSI. Residues 257-261 are Mitochondrial intermembrane-facing; sequence YWWGS.

The protein belongs to the cytochrome c oxidase subunit 3 family. In terms of assembly, component of the cytochrome c oxidase (complex IV, CIV), a multisubunit enzyme composed of 14 subunits. The complex is composed of a catalytic core of 3 subunits MT-CO1, MT-CO2 and MT-CO3, encoded in the mitochondrial DNA, and 11 supernumerary subunits COX4I, COX5A, COX5B, COX6A, COX6B, COX6C, COX7A, COX7B, COX7C, COX8 and NDUFA4, which are encoded in the nuclear genome. The complex exists as a monomer or a dimer and forms supercomplexes (SCs) in the inner mitochondrial membrane with NADH-ubiquinone oxidoreductase (complex I, CI) and ubiquinol-cytochrome c oxidoreductase (cytochrome b-c1 complex, complex III, CIII), resulting in different assemblies (supercomplex SCI(1)III(2)IV(1) and megacomplex MCI(2)III(2)IV(2)).

The protein localises to the mitochondrion inner membrane. The catalysed reaction is 4 Fe(II)-[cytochrome c] + O2 + 8 H(+)(in) = 4 Fe(III)-[cytochrome c] + 2 H2O + 4 H(+)(out). In terms of biological role, component of the cytochrome c oxidase, the last enzyme in the mitochondrial electron transport chain which drives oxidative phosphorylation. The respiratory chain contains 3 multisubunit complexes succinate dehydrogenase (complex II, CII), ubiquinol-cytochrome c oxidoreductase (cytochrome b-c1 complex, complex III, CIII) and cytochrome c oxidase (complex IV, CIV), that cooperate to transfer electrons derived from NADH and succinate to molecular oxygen, creating an electrochemical gradient over the inner membrane that drives transmembrane transport and the ATP synthase. Cytochrome c oxidase is the component of the respiratory chain that catalyzes the reduction of oxygen to water. Electrons originating from reduced cytochrome c in the intermembrane space (IMS) are transferred via the dinuclear copper A center (CU(A)) of subunit 2 and heme A of subunit 1 to the active site in subunit 1, a binuclear center (BNC) formed by heme A3 and copper B (CU(B)). The BNC reduces molecular oxygen to 2 water molecules using 4 electrons from cytochrome c in the IMS and 4 protons from the mitochondrial matrix. This Tragelaphus oryx (Eland) protein is Cytochrome c oxidase subunit 3 (MT-CO3).